The chain runs to 296 residues: Probable AP endonuclease (296 aa).

A disulfide bridge connects residues Cys16 and Cys20. Zn(2+)-binding residues include His78, His115, Glu142, His182, His218, Asp231, His233, and Glu271.

Belongs to the AP endonuclease 2 family. Zn(2+) serves as cofactor.

Its subcellular location is the host nucleus. The protein localises to the host cytoplasm. The protein resides in the virion. Functionally, endonuclease of the viral base excision repair system that catalyzes DNA cleavage reaction at the apurinic or apyrimidinic sites (AP sites). Cleaves phosphodiester bonds on the 5' side of AP sites. In addition to endonuclease activity, the AP endonuclease has a proofreading 3'-5' exonuclease activity that is considerably more efficient in the elimination of a mismatch than in that of a correctly paired base. Displays 3'-phosphatase and 3'-repair diesterase activities. The single nucleotide gaps generated by the AP endonuclease are filled by the viral repair DNA polymerase X and the DNA ligase. The chain is Probable AP endonuclease from Ornithodoros (relapsing fever ticks).